Consider the following 146-residue polypeptide: Flavodoxin (146 aa).

The 140-residue stretch at 4–143 (SLIVYGSTTG…EIVSWGSGIA (140 aa)) folds into the Flavodoxin-like domain.

Belongs to the flavodoxin family. It depends on FMN as a cofactor.

In terms of biological role, low-potential electron donor to a number of redox enzymes. The polypeptide is Flavodoxin (Maridesulfovibrio salexigens (strain ATCC 14822 / DSM 2638 / NCIMB 8403 / VKM B-1763) (Desulfovibrio salexigens)).